Reading from the N-terminus, the 213-residue chain is Thiamine-phosphate synthase (213 aa).

Residues 41–45 (QFRVK) and N73 each bind 4-amino-2-methyl-5-(diphosphooxymethyl)pyrimidine. 2 residues coordinate Mg(2+): D74 and D93. T112 contacts 4-amino-2-methyl-5-(diphosphooxymethyl)pyrimidine. 2-[(2R,5Z)-2-carboxy-4-methylthiazol-5(2H)-ylidene]ethyl phosphate is bound at residue 139–141 (SAT). K142 lines the 4-amino-2-methyl-5-(diphosphooxymethyl)pyrimidine pocket. Residue G171 participates in 2-[(2R,5Z)-2-carboxy-4-methylthiazol-5(2H)-ylidene]ethyl phosphate binding.

The protein belongs to the thiamine-phosphate synthase family. Mg(2+) serves as cofactor.

It catalyses the reaction 2-[(2R,5Z)-2-carboxy-4-methylthiazol-5(2H)-ylidene]ethyl phosphate + 4-amino-2-methyl-5-(diphosphooxymethyl)pyrimidine + 2 H(+) = thiamine phosphate + CO2 + diphosphate. The enzyme catalyses 2-(2-carboxy-4-methylthiazol-5-yl)ethyl phosphate + 4-amino-2-methyl-5-(diphosphooxymethyl)pyrimidine + 2 H(+) = thiamine phosphate + CO2 + diphosphate. The catalysed reaction is 4-methyl-5-(2-phosphooxyethyl)-thiazole + 4-amino-2-methyl-5-(diphosphooxymethyl)pyrimidine + H(+) = thiamine phosphate + diphosphate. It functions in the pathway cofactor biosynthesis; thiamine diphosphate biosynthesis; thiamine phosphate from 4-amino-2-methyl-5-diphosphomethylpyrimidine and 4-methyl-5-(2-phosphoethyl)-thiazole: step 1/1. Its function is as follows. Condenses 4-methyl-5-(beta-hydroxyethyl)thiazole monophosphate (THZ-P) and 2-methyl-4-amino-5-hydroxymethyl pyrimidine pyrophosphate (HMP-PP) to form thiamine monophosphate (TMP). The polypeptide is Thiamine-phosphate synthase (Erythrobacter litoralis (strain HTCC2594)).